Consider the following 300-residue polypeptide: N-acetylmuramic acid 6-phosphate etherase (300 aa).

The 164-residue stretch at 57-220 folds into the SIS domain; that stretch reads IAVAFQCGGR…TTGAMIRTGK (164 aa). The Proton donor role is filled by Glu85. Glu116 is an active-site residue.

The protein belongs to the GCKR-like family. MurNAc-6-P etherase subfamily. Homodimer.

It catalyses the reaction N-acetyl-D-muramate 6-phosphate + H2O = N-acetyl-D-glucosamine 6-phosphate + (R)-lactate. It functions in the pathway amino-sugar metabolism; 1,6-anhydro-N-acetylmuramate degradation. Its pathway is amino-sugar metabolism; N-acetylmuramate degradation. The protein operates within cell wall biogenesis; peptidoglycan recycling. In terms of biological role, specifically catalyzes the cleavage of the D-lactyl ether substituent of MurNAc 6-phosphate, producing GlcNAc 6-phosphate and D-lactate. Together with AnmK, is also required for the utilization of anhydro-N-acetylmuramic acid (anhMurNAc) either imported from the medium or derived from its own cell wall murein, and thus plays a role in cell wall recycling. The protein is N-acetylmuramic acid 6-phosphate etherase of Aliivibrio salmonicida (strain LFI1238) (Vibrio salmonicida (strain LFI1238)).